Here is a 100-residue protein sequence, read N- to C-terminus: Integration host factor subunit beta (100 aa).

The segment at 81 to 100 is disordered; the sequence is KPGKELRDRVNEDEHEEAHT. Residues 82–100 are compositionally biased toward basic and acidic residues; that stretch reads PGKELRDRVNEDEHEEAHT.

Belongs to the bacterial histone-like protein family. Heterodimer of an alpha and a beta chain.

Its function is as follows. This protein is one of the two subunits of integration host factor, a specific DNA-binding protein that functions in genetic recombination as well as in transcriptional and translational control. The sequence is that of Integration host factor subunit beta (ihfB) from Pseudomonas putida (Arthrobacter siderocapsulatus).